An 84-amino-acid chain; its full sequence is Small ribosomal subunit protein bS18A (84 aa).

The protein belongs to the bacterial ribosomal protein bS18 family. Part of the 30S ribosomal subunit. Forms a tight heterodimer with protein bS6.

In terms of biological role, binds as a heterodimer with protein bS6 to the central domain of the 16S rRNA, where it helps stabilize the platform of the 30S subunit. The sequence is that of Small ribosomal subunit protein bS18A (rpsR1) from Mycobacterium bovis (strain ATCC BAA-935 / AF2122/97).